The following is a 348-amino-acid chain: L-threonine 3-dehydrogenase (348 aa).

Residue cysteine 38 participates in Zn(2+) binding. Catalysis depends on charge relay system residues threonine 40 and histidine 43. Residues histidine 63, glutamate 64, cysteine 93, cysteine 96, cysteine 99, and cysteine 107 each coordinate Zn(2+). Residues isoleucine 175, aspartate 195, arginine 200, 263–265 (LGI), and 287–288 (IY) contribute to the NAD(+) site.

It belongs to the zinc-containing alcohol dehydrogenase family. Homotetramer. Zn(2+) serves as cofactor.

The protein resides in the cytoplasm. The catalysed reaction is L-threonine + NAD(+) = (2S)-2-amino-3-oxobutanoate + NADH + H(+). It functions in the pathway amino-acid degradation; L-threonine degradation via oxydo-reductase pathway; glycine from L-threonine: step 1/2. Its function is as follows. Catalyzes the NAD(+)-dependent oxidation of L-threonine to 2-amino-3-ketobutyrate. This chain is L-threonine 3-dehydrogenase, found in Deinococcus radiodurans (strain ATCC 13939 / DSM 20539 / JCM 16871 / CCUG 27074 / LMG 4051 / NBRC 15346 / NCIMB 9279 / VKM B-1422 / R1).